A 471-amino-acid polypeptide reads, in one-letter code: Variant surface glycoprotein ILTAT 1.1BC (471 aa).

The signal sequence occupies residues 1–21; it reads MVKAIASLMLLHIWAIEEIKA. An N-linked (GlcNAc...) asparagine glycan is attached at Asn130. The segment covering 158–168 has biased composition (polar residues); sequence TVSKTTECNTE. Disordered regions lie at residues 158–183 and 204–232; these read TVSK…TLSK and GGAC…TTAS. Positions 214–226 are enriched in basic and acidic residues; sequence DKIHITNETDSKN. Residues Asn220 and Asn260 are each glycosylated (N-linked (GlcNAc...) asparagine). Disulfide bonds link Cys397–Cys410 and Cys406–Cys421. Positions 432–454 are disordered; the sequence is AEQAATNQETEGKDGKTTNTTGS. Asn450 is a glycosylation site (N-linked (GlcNAc...) asparagine). Ser454 is lipidated: GPI-anchor amidated serine. Positions 455-471 are cleaved as a propeptide — removed in mature form; it reads NSFLINKAPVLLAFLLL.

The protein resides in the cell membrane. Functionally, VSG forms a coat on the surface of the parasite. The trypanosome evades the immune response of the host by expressing a series of antigenically distinct VSGs from an estimated 1000 VSG genes. In Trypanosoma brucei brucei, this protein is Variant surface glycoprotein ILTAT 1.1BC.